A 128-amino-acid polypeptide reads, in one-letter code: 3-aminoacrylate deaminase RutC (128 aa).

Belongs to the RutC family. In terms of assembly, homotrimer.

The enzyme catalyses (Z)-3-aminoacrylate + H2O + H(+) = 3-oxopropanoate + NH4(+). Functionally, involved in pyrimidine catabolism. Catalyzes the deamination of 3-aminoacrylate to malonic semialdehyde, a reaction that can also occur spontaneously. RutC may facilitate the reaction and modulate the metabolic fitness, rather than catalyzing essential functions. The chain is 3-aminoacrylate deaminase RutC from Escherichia coli O111:H- (strain 11128 / EHEC).